Reading from the N-terminus, the 103-residue chain is Co-chaperonin GroES (103 aa).

Belongs to the GroES chaperonin family. As to quaternary structure, heptamer of 7 subunits arranged in a ring. Interacts with the chaperonin GroEL.

It is found in the cytoplasm. Its function is as follows. Together with the chaperonin GroEL, plays an essential role in assisting protein folding. The GroEL-GroES system forms a nano-cage that allows encapsulation of the non-native substrate proteins and provides a physical environment optimized to promote and accelerate protein folding. GroES binds to the apical surface of the GroEL ring, thereby capping the opening of the GroEL channel. The sequence is that of Co-chaperonin GroES from Synechococcus sp. (strain CC9605).